The primary structure comprises 80 residues: uncharacterized protein (80 aa).

A run of 2 helical transmembrane segments spans residues Ala15–Val35 and Trp45–Val65.

The protein to H.influenzae HI_0974B.

It is found in the cell membrane. This is an uncharacterized protein from Escherichia coli (strain K12).